The sequence spans 233 residues: Endonuclease V (233 aa).

Residues aspartate 48 and aspartate 116 each contribute to the Mg(2+) site.

Belongs to the endonuclease V family. It depends on Mg(2+) as a cofactor.

Its subcellular location is the cytoplasm. It catalyses the reaction Endonucleolytic cleavage at apurinic or apyrimidinic sites to products with a 5'-phosphate.. In terms of biological role, DNA repair enzyme involved in the repair of deaminated bases. Selectively cleaves double-stranded DNA at the second phosphodiester bond 3' to a deoxyinosine leaving behind the intact lesion on the nicked DNA. This chain is Endonuclease V, found in Streptomyces coelicolor (strain ATCC BAA-471 / A3(2) / M145).